Consider the following 147-residue polypeptide: Phosphoribosyl-AMP cyclohydrolase (147 aa).

Asp89 contacts Mg(2+). Cys90 lines the Zn(2+) pocket. The Mg(2+) site is built by Asp91 and Asp93. Cys106 and Cys113 together coordinate Zn(2+).

This sequence belongs to the PRA-CH family. As to quaternary structure, homodimer. It depends on Mg(2+) as a cofactor. Requires Zn(2+) as cofactor.

The protein resides in the cytoplasm. It catalyses the reaction 1-(5-phospho-beta-D-ribosyl)-5'-AMP + H2O = 1-(5-phospho-beta-D-ribosyl)-5-[(5-phospho-beta-D-ribosylamino)methylideneamino]imidazole-4-carboxamide. Its pathway is amino-acid biosynthesis; L-histidine biosynthesis; L-histidine from 5-phospho-alpha-D-ribose 1-diphosphate: step 3/9. Catalyzes the hydrolysis of the adenine ring of phosphoribosyl-AMP. In Nitrobacter hamburgensis (strain DSM 10229 / NCIMB 13809 / X14), this protein is Phosphoribosyl-AMP cyclohydrolase.